A 156-amino-acid chain; its full sequence is Small ribosomal subunit protein uS7 (156 aa).

Belongs to the universal ribosomal protein uS7 family. As to quaternary structure, part of the 30S ribosomal subunit. Contacts proteins S9 and S11.

Its function is as follows. One of the primary rRNA binding proteins, it binds directly to 16S rRNA where it nucleates assembly of the head domain of the 30S subunit. Is located at the subunit interface close to the decoding center, probably blocks exit of the E-site tRNA. The chain is Small ribosomal subunit protein uS7 from Mycobacterium tuberculosis (strain CDC 1551 / Oshkosh).